Reading from the N-terminus, the 445-residue chain is Beclin-1 (445 aa).

Residues 103–122 (TMENLSRRLKVTGDLFDIMS) carry the BH3 motif. Residues 137-264 (DTLLDQLDTQ…QLDKLKKTNV (128 aa)) are a coiled coil. The interval 240–445 (DDLKSVENQM…AWVSSQFYNK (206 aa)) is evolutionary conserved domain (ECD). Residues 420-445 (WTKALKFMLTNLKWGLAWVSSQFYNK) are required for membrane-association.

It belongs to the beclin family. In terms of assembly, component of the PI3K (PI3KC3/PI3K-III/class III phosphatidylinositol 3-kinase) complex. May be proteolytically processed by caspases; the C-terminal fragment(s) may induce apoptosis.

It is found in the cytoplasm. It localises to the golgi apparatus. The protein resides in the trans-Golgi network membrane. Its subcellular location is the endosome membrane. The protein localises to the endoplasmic reticulum membrane. It is found in the mitochondrion membrane. It localises to the cytoplasmic vesicle. The protein resides in the autophagosome. Its function is as follows. Plays a central role in autophagy. Acts as core subunit of different PI3K complex forms that mediate formation of phosphatidylinositol 3-phosphate and are believed to play a role in multiple membrane trafficking pathways: PI3KC3-C1 is involved in initiation of autophagosomes and PI3KC3-C2 in maturation of autophagosomes and endocytosis. Involved in regulation of degradative endocytic trafficking and required for the abscission step in cytokinesis, probably in the context of PI3KC3-C2. Essential for the formation of PI3KC3-C2 but not PI3KC3-C1 PI3K complex forms. Involved in endocytosis including endosome formation in neuronal cells. This Xenopus tropicalis (Western clawed frog) protein is Beclin-1 (becn1).